A 300-amino-acid polypeptide reads, in one-letter code: Polyamine aminopropyltransferase (300 aa).

The region spanning 4-237 (WHWHIEWQTP…GLWGFVYASD (234 aa)) is the PABS domain. S-methyl-5'-thioadenosine is bound at residue Gln-33. Residues His-64 and Glu-88 each coordinate spermidine. S-methyl-5'-thioadenosine contacts are provided by residues Asp-108 and 140–141 (DG). The active-site Proton acceptor is Asp-158. Pro-167 contributes to the S-methyl-5'-thioadenosine binding site.

This sequence belongs to the spermidine/spermine synthase family. In terms of assembly, homodimer or homotetramer.

It localises to the cytoplasm. It catalyses the reaction S-adenosyl 3-(methylsulfanyl)propylamine + putrescine = S-methyl-5'-thioadenosine + spermidine + H(+). The protein operates within amine and polyamine biosynthesis; spermidine biosynthesis; spermidine from putrescine: step 1/1. Functionally, catalyzes the irreversible transfer of a propylamine group from the amino donor S-adenosylmethioninamine (decarboxy-AdoMet) to putrescine (1,4-diaminobutane) to yield spermidine. The protein is Polyamine aminopropyltransferase of Sulfurisphaera tokodaii (strain DSM 16993 / JCM 10545 / NBRC 100140 / 7) (Sulfolobus tokodaii).